A 27-amino-acid polypeptide reads, in one-letter code: NADH-ubiquinone oxidoreductase chain 1 (27 aa).

A helical membrane pass occupies residues L3–F23.

The protein belongs to the complex I subunit 1 family.

It localises to the mitochondrion inner membrane. The enzyme catalyses a ubiquinone + NADH + 5 H(+)(in) = a ubiquinol + NAD(+) + 4 H(+)(out). Functionally, core subunit of the mitochondrial membrane respiratory chain NADH dehydrogenase (Complex I) that is believed to belong to the minimal assembly required for catalysis. Complex I functions in the transfer of electrons from NADH to the respiratory chain. The immediate electron acceptor for the enzyme is believed to be ubiquinone. In Simulium vittatum (Striped black fly), this protein is NADH-ubiquinone oxidoreductase chain 1 (ND1).